We begin with the raw amino-acid sequence, 686 residues long: Zinc finger protein 7 (686 aa).

Residues 4-76 enclose the KRAB domain; it reads VTFGDVAVHF…DLQGAEGTEA (73 aa). Residues K81 and K101 each participate in a glycyl lysine isopeptide (Lys-Gly) (interchain with G-Cter in SUMO2) cross-link. 2 positions are modified to phosphoserine: S126 and S138. C2H2-type zinc fingers lie at residues 223–245, 250–272, 278–300, 306–328, 334–356, and 362–384; these read SRCQ…NNCH, YECA…QRIH, FKCT…QRIH, YRCE…QRIH, YGCR…QRTH, and YPCK…QRMH. Residues K279 and K292 each participate in a glycyl lysine isopeptide (Lys-Gly) (interchain with G-Cter in SUMO2) cross-link. K393 is covalently cross-linked (Glycyl lysine isopeptide (Lys-Gly) (interchain with G-Cter in SUMO2)). 9 C2H2-type zinc fingers span residues 413-435, 441-463, 469-491, 497-519, 525-547, 553-575, 581-603, 634-656, and 662-684; these read FKCD…QLIH, YKCN…QRTH, FKCD…QRIH, YVCN…QRIH, YECL…QRVH, YKCN…QIIH, YECS…QRIH, HQCE…QRIH, and YKCN…QKIH.

It belongs to the krueppel C2H2-type zinc-finger protein family.

It is found in the nucleus. May be involved in transcriptional regulation. The chain is Zinc finger protein 7 (ZNF7) from Pongo abelii (Sumatran orangutan).